Reading from the N-terminus, the 607-residue chain is SNW/SKI-interacting protein A (607 aa).

Disordered regions lie at residues 29–77 (ERYG…GGAF), 178–205 (AQPK…AAFN), 217–265 (EMAQ…IPPC), 327–434 (LQLK…DRDR), and 516–607 (KVMK…ERGR). Residues 35-49 (SAQSDAAAAAAKPSG) are compositionally biased toward low complexity. Residues 190–353 (SKFIKYKPSQ…QKARMERTGA (164 aa)) are SNW. Residues 240–251 (PPVPVMHSPPRP) show a composition bias toward pro residues. Coiled-coil stretches lie at residues 313 to 349 (AREA…ARME) and 391 to 418 (EREA…LEAR). 5 stretches are compositionally biased toward basic and acidic residues: residues 327-339 (LQLK…EQEL), 379-434 (EQPR…DRDR), 516-527 (KVMKTDRFKPDK), 535-550 (RSGK…KQEE), and 562-571 (EVKKGKKAVE).

This sequence belongs to the SNW family. As to quaternary structure, interacts with FLO6/SIP4. Interacts with DIS1. Widely expressed.

The protein resides in the nucleus. In terms of biological role, acts as a positive regulator of drought and salt tolerance. Acts as a positive regulator of cell viability. The sequence is that of SNW/SKI-interacting protein A from Oryza sativa subsp. japonica (Rice).